Here is a 340-residue protein sequence, read N- to C-terminus: Flap endonuclease 1 (340 aa).

Residues 1–98 are N-domain; the sequence is MGVPIGEIIP…KELEKRREAR (98 aa). 7 residues coordinate Mg(2+): Asp-27, Asp-80, Glu-152, Glu-154, Asp-173, Asp-175, and Asp-236. The tract at residues 116–258 is I-domain; that stretch reads EARKYAQRAT…KALEIVRHSK (143 aa). The interaction with PCNA stretch occupies residues 330–338; the sequence is KQSTLESWF.

The protein belongs to the XPG/RAD2 endonuclease family. FEN1 subfamily. Interacts with PCNA. PCNA stimulates the nuclease activity without altering cleavage specificity. Mg(2+) is required as a cofactor.

Its function is as follows. Structure-specific nuclease with 5'-flap endonuclease and 5'-3' exonuclease activities involved in DNA replication and repair. During DNA replication, cleaves the 5'-overhanging flap structure that is generated by displacement synthesis when DNA polymerase encounters the 5'-end of a downstream Okazaki fragment. Binds the unpaired 3'-DNA end and kinks the DNA to facilitate 5' cleavage specificity. Cleaves one nucleotide into the double-stranded DNA from the junction in flap DNA, leaving a nick for ligation. Also involved in the base excision repair (BER) pathway. Acts as a genome stabilization factor that prevents flaps from equilibrating into structures that lead to duplications and deletions. Also possesses 5'-3' exonuclease activity on nicked or gapped double-stranded DNA. This chain is Flap endonuclease 1, found in Pyrococcus furiosus (strain ATCC 43587 / DSM 3638 / JCM 8422 / Vc1).